The chain runs to 89 residues: Small ribosomal subunit protein uS15 (89 aa).

This sequence belongs to the universal ribosomal protein uS15 family. In terms of assembly, part of the 30S ribosomal subunit. Forms a bridge to the 50S subunit in the 70S ribosome, contacting the 23S rRNA.

Functionally, one of the primary rRNA binding proteins, it binds directly to 16S rRNA where it helps nucleate assembly of the platform of the 30S subunit by binding and bridging several RNA helices of the 16S rRNA. Forms an intersubunit bridge (bridge B4) with the 23S rRNA of the 50S subunit in the ribosome. The sequence is that of Small ribosomal subunit protein uS15 from Photobacterium profundum (strain SS9).